The primary structure comprises 118 residues: Waprin-Enh1 (118 aa).

Residues 1–24 (MKTLTGLLLVGLLALWIGLPSTSS) form the signal peptide. 2 consecutive WAP domains span residues 25 to 72 (KILF…RSCR) and 74 to 118 (PPVL…RICK). 8 cysteine pairs are disulfide-bonded: cysteine 30–cysteine 63, cysteine 40–cysteine 67, cysteine 50–cysteine 62, cysteine 56–cysteine 71, cysteine 81–cysteine 109, cysteine 88–cysteine 113, cysteine 96–cysteine 108, and cysteine 102–cysteine 117.

The protein belongs to the venom waprin family. As to expression, expressed by the venom gland.

Its subcellular location is the secreted. Damages membranes of susceptible bacteria. Has no hemolytic activity. Not toxic to mice. Does not inhibit the proteinases elastase and cathepsin G. This chain is Waprin-Enh1, found in Pseudoferania polylepis (Macleay's water snake).